Here is a 963-residue protein sequence, read N- to C-terminus: MEQERIMQRVQKDVRSLLIASKNGLSIQELEQDYRMMIGSQIPLRSLGYKSTMELLLDMPNVVQIHTQMDGTVNLSAVVDEATRKIADLVSCQKDRSTARSRNRRRNIRPRCPVDLVRRGRVSPVLPATVKSDLRDLLSLSPLLLSELEKAFFSRFGRSFQYTRYGFYSMLEVLRSISDIVEVKQTRTGSLLVLRKSETGHISASLCVKKSLDCQPAAVPNKTSCVFEKCLNEPQRPEKKPSEPATSLKISPPEFQKFSSQEPQSITSSRSFLHSSSNKEPDVNRNVSLGESKKSIENKTSPAVPSNNVVLNNSLVKNSETFESLFTRMSKPVSHVEADHANASEPNSSDLNWLEKKLEKELKLCLARKGAGGSVSDDLRSDIKHVVNQHSNGLNISLLPTAFKSFTGKDLPFKELGFMSVMELVGSLGDILCLESTDEGKDWKLFGAKKEDLVDEFSAGLRSTNSSLSSWNSTRQSTAPLKPVGTIFSKVDEKLWWGPLELKVCSTEQIDIPPDAVRNQKLHCLPRIKHSLMIGVYVESIESPSQFYVRCCGKDTSEKLEDMMIEMRHCYSNECVSERYIVPDNCISVGQIYALRVPGDVWWYRVIVHSIKNSELLDVFYPDFGNVATVKKSWLRFLKNCYMKVPAQAVPSSLPFVTSTEAQWSTQAIKRFRQLCSCLPLVGLVLQYVQDVLVIFLCDTSSAEDVYLHQLLIAQGLAKMEPEHACKKVSRNTFMHYLTPSQEKPQEESSKSSVPSESSQSEVLCTKETILQVIDEVDPEMPYLEAFPTDTDVWDENWVFSDGAGGSNTTPTIPKVETQKQENKISKEQKQPFKFCMDSGDASVVHRPLEEFYISLIKSSKSQESTDIQQSSHTEEQHLAEKSHRCTAEQLQGGSSSSMLCEKKLYYENKDLTYCQQQSKCSFSPLIGFQKLQIPRSATPAALGPAARLATAGRLLYWASDSH.

2 consecutive HTH OST-type domains span residues 6 to 79 and 122 to 197; these read IMQR…SAVV and VSPV…LRKS. Positions 232 to 306 are disordered; it reads NEPQRPEKKP…ENKTSPAVPS (75 aa). Polar residues predominate over residues 257–276; it reads KFSSQEPQSITSSRSFLHSS. The 75-residue stretch at 375–449 folds into the HTH OST-type 3 domain; that stretch reads VSDDLRSDIK…GKDWKLFGAK (75 aa). A Tudor domain is found at 586–645; that stretch reads CISVGQIYALRVPGDVWWYRVIVHSIKNSELLDVFYPDFGNVATVKKSWLRFLKNCYMKV. Disordered stretches follow at residues 739 to 763, 803 to 822, and 864 to 891; these read TPSQ…QSEV, GAGG…QKQE, and ESTD…AEQL. The span at 751–763 shows a compositional bias: low complexity; that stretch reads KSSVPSESSQSEV. Over residues 873–887 the composition is skewed to basic and acidic residues; that stretch reads HTEEQHLAEKSHRCT.

Belongs to the TDRD5 family.

It localises to the cytoplasm. Functionally, required during spermiogenesis to participate in the repression transposable elements and prevent their mobilization, which is essential for the germline integrity. Probably acts via the piRNA metabolic process, which mediates the repression of transposable elements during meiosis by forming complexes composed of piRNAs and Piwi proteins and govern the methylation and subsequent repression of transposons. The protein is Tudor domain-containing protein 5 (tdrd5) of Xenopus laevis (African clawed frog).